We begin with the raw amino-acid sequence, 365 residues long: tRNA/tmRNA (uracil-C(5))-methyltransferase (365 aa).

S-adenosyl-L-methionine is bound by residues Gln189, Tyr217, Asn222, Glu238, and Asp298. The active-site Nucleophile is the Cys323. Catalysis depends on Glu357, which acts as the Proton acceptor.

This sequence belongs to the class I-like SAM-binding methyltransferase superfamily. RNA M5U methyltransferase family. TrmA subfamily.

The catalysed reaction is uridine(54) in tRNA + S-adenosyl-L-methionine = 5-methyluridine(54) in tRNA + S-adenosyl-L-homocysteine + H(+). The enzyme catalyses uridine(341) in tmRNA + S-adenosyl-L-methionine = 5-methyluridine(341) in tmRNA + S-adenosyl-L-homocysteine + H(+). Its function is as follows. Dual-specificity methyltransferase that catalyzes the formation of 5-methyluridine at position 54 (m5U54) in all tRNAs, and that of position 341 (m5U341) in tmRNA (transfer-mRNA). In Shewanella halifaxensis (strain HAW-EB4), this protein is tRNA/tmRNA (uracil-C(5))-methyltransferase.